The chain runs to 499 residues: Pentatricopeptide repeat-containing protein At5g61800 (499 aa).

PPR repeat units lie at residues 78-113 (STFC…SVPP), 114-150 (DFHT…GLLS), 151-181 (DLFT…NPQR), 182-212 (DVVT…MPLR), 213-247 (DLVS…GLKP), 248-282 (DNVA…RLFI), 283-313 (DSFL…CSDK), 314-348 (TLFT…GIKP), 349-379 (DGVT…MRSL), and 385-419 (EMKH…GGNR). Residues 424–499 (AWSGLLGGCR…KNVGFSKVLS (76 aa)) form a type E motif region.

The protein belongs to the PPR family. PCMP-E subfamily.

The sequence is that of Pentatricopeptide repeat-containing protein At5g61800 (PCMP-E8) from Arabidopsis thaliana (Mouse-ear cress).